A 62-amino-acid polypeptide reads, in one-letter code: DNA-directed RNA polymerase subunit Rpo10 (62 aa).

Zn(2+) is bound by residues Cys6, Cys9, Cys43, and Cys44.

Belongs to the archaeal Rpo10/eukaryotic RPB10 RNA polymerase subunit family. In terms of assembly, part of the RNA polymerase complex. Requires Zn(2+) as cofactor.

The protein resides in the cytoplasm. It carries out the reaction RNA(n) + a ribonucleoside 5'-triphosphate = RNA(n+1) + diphosphate. Functionally, DNA-dependent RNA polymerase (RNAP) catalyzes the transcription of DNA into RNA using the four ribonucleoside triphosphates as substrates. This is DNA-directed RNA polymerase subunit Rpo10 from Methanosphaerula palustris (strain ATCC BAA-1556 / DSM 19958 / E1-9c).